A 180-amino-acid chain; its full sequence is Shikimate kinase (180 aa).

15–20 (GAGKTT) provides a ligand contact to ATP. Thr19 is a binding site for Mg(2+). Substrate-binding residues include Asp37, Arg61, and Gly83. Arg121 lines the ATP pocket. Position 140 (Arg140) interacts with substrate.

It belongs to the shikimate kinase family. In terms of assembly, monomer. Mg(2+) serves as cofactor.

It localises to the cytoplasm. It catalyses the reaction shikimate + ATP = 3-phosphoshikimate + ADP + H(+). It functions in the pathway metabolic intermediate biosynthesis; chorismate biosynthesis; chorismate from D-erythrose 4-phosphate and phosphoenolpyruvate: step 5/7. Its function is as follows. Catalyzes the specific phosphorylation of the 3-hydroxyl group of shikimic acid using ATP as a cosubstrate. In Psychrobacter sp. (strain PRwf-1), this protein is Shikimate kinase.